A 552-amino-acid chain; its full sequence is MAKFIFVTGGVVSSIGKGIVAASLGRLLKSRDYSVSILKLDPYINVDPGTMSPFQHGEVFVTEDGAETDLDLGHYERFTDTSMSRLNSVTTGSIYQAVINKERRGDYQGGTVQVIPHITNEIKERIFRVAENTNPDFVITEIGGTVGDIESLPFLEAIRQFRKEAGRDNVLYMHVTLIPWISSAGEMKTKPTQHSVKELRSIGIQPDVLVCRCDRPLPQGQREKISEFCNVPEEQVITSQDASSIYEVPLMLEREGLAEQTLKLLRMEPRQPNLEQWQNLVERMKRPNRHMDIAIVGKYVQLNDAYLSVVESLGHAAIANDMDIKLHWVNAEDIEKHGASMYLADMAGIVVPGGFGLRGVDGKVAAIEYARLNQIPFLGLCLGMQSSVIEWARNVAKLEDAHSAEFNPEAKNPVINLLPEQRDVVDLGGTMRLGLYPCRLTPDTLTYQLYGQEVIYERHRHRYEFNNAYRSLFLETGYQVSGTSPDGRLVEIIEYADHPFFIATQFHPEFQSRPNHPHPLFFGFIQAAGNHKSQPISDELDNQSTEMSISLS.

The tract at residues 1–267 (MAKFIFVTGG…AEQTLKLLRM (267 aa)) is amidoligase domain. CTP is bound at residue serine 13. Residue serine 13 participates in UTP binding. ATP contacts are provided by residues 14-19 (SIGKGI) and aspartate 71. Residues aspartate 71 and glutamate 141 each contribute to the Mg(2+) site. Residues 148 to 150 (DIE), 188 to 193 (KTKPTQ), and lysine 224 each bind CTP. Residues 188–193 (KTKPTQ) and lysine 224 each bind UTP. Residues 292 to 534 (DIAIVGKYVQ…IQAAGNHKSQ (243 aa)) form the Glutamine amidotransferase type-1 domain. Residue glycine 354 coordinates L-glutamine. Residue cysteine 381 is the Nucleophile; for glutamine hydrolysis of the active site. Residues 382-385 (LGMQ), glutamate 405, and arginine 462 each bind L-glutamine. Catalysis depends on residues histidine 507 and glutamate 509. The disordered stretch occupies residues 533-552 (SQPISDELDNQSTEMSISLS).

Belongs to the CTP synthase family. In terms of assembly, homotetramer.

It carries out the reaction UTP + L-glutamine + ATP + H2O = CTP + L-glutamate + ADP + phosphate + 2 H(+). The catalysed reaction is L-glutamine + H2O = L-glutamate + NH4(+). It catalyses the reaction UTP + NH4(+) + ATP = CTP + ADP + phosphate + 2 H(+). It functions in the pathway pyrimidine metabolism; CTP biosynthesis via de novo pathway; CTP from UDP: step 2/2. Its activity is regulated as follows. Allosterically activated by GTP, when glutamine is the substrate; GTP has no effect on the reaction when ammonia is the substrate. The allosteric effector GTP functions by stabilizing the protein conformation that binds the tetrahedral intermediate(s) formed during glutamine hydrolysis. Inhibited by the product CTP, via allosteric rather than competitive inhibition. Its function is as follows. Catalyzes the ATP-dependent amination of UTP to CTP with either L-glutamine or ammonia as the source of nitrogen. Regulates intracellular CTP levels through interactions with the four ribonucleotide triphosphates. The chain is CTP synthase from Picosynechococcus sp. (strain ATCC 27264 / PCC 7002 / PR-6) (Agmenellum quadruplicatum).